A 214-amino-acid polypeptide reads, in one-letter code: 3-isopropylmalate dehydratase small subunit (214 aa).

Belongs to the LeuD family. LeuD type 1 subfamily. As to quaternary structure, heterodimer of LeuC and LeuD.

The catalysed reaction is (2R,3S)-3-isopropylmalate = (2S)-2-isopropylmalate. It participates in amino-acid biosynthesis; L-leucine biosynthesis; L-leucine from 3-methyl-2-oxobutanoate: step 2/4. Its function is as follows. Catalyzes the isomerization between 2-isopropylmalate and 3-isopropylmalate, via the formation of 2-isopropylmaleate. This chain is 3-isopropylmalate dehydratase small subunit, found in Desulforapulum autotrophicum (strain ATCC 43914 / DSM 3382 / VKM B-1955 / HRM2) (Desulfobacterium autotrophicum).